A 527-amino-acid polypeptide reads, in one-letter code: Light-independent protochlorophyllide reductase subunit B (527 aa).

Asp-36 lines the [4Fe-4S] cluster pocket. The active-site Proton donor is the Asp-292. 428–429 (GL) provides a ligand contact to substrate.

It belongs to the ChlB/BchB/BchZ family. In terms of assembly, protochlorophyllide reductase is composed of three subunits; BchL, BchN and BchB. Forms a heterotetramer of two BchB and two BchN subunits. The cofactor is [4Fe-4S] cluster.

It catalyses the reaction chlorophyllide a + oxidized 2[4Fe-4S]-[ferredoxin] + 2 ADP + 2 phosphate = protochlorophyllide a + reduced 2[4Fe-4S]-[ferredoxin] + 2 ATP + 2 H2O. The protein operates within porphyrin-containing compound metabolism; bacteriochlorophyll biosynthesis (light-independent). Its function is as follows. Component of the dark-operative protochlorophyllide reductase (DPOR) that uses Mg-ATP and reduced ferredoxin to reduce ring D of protochlorophyllide (Pchlide) to form chlorophyllide a (Chlide). This reaction is light-independent. The NB-protein (BchN-BchB) is the catalytic component of the complex. This is Light-independent protochlorophyllide reductase subunit B from Chlorobium phaeovibrioides (strain DSM 265 / 1930) (Prosthecochloris vibrioformis (strain DSM 265)).